An 83-amino-acid polypeptide reads, in one-letter code: Short neurotoxin 1 (83 aa).

Residues 1 to 21 (MKTLLLTLVVVTIVCLDLGYT) form the signal peptide. Disulfide bonds link C24-C45, C38-C62, C64-C75, and C76-C81.

The protein belongs to the three-finger toxin family. Short-chain subfamily. Type I alpha-neurotoxin sub-subfamily. As to expression, expressed by the venom gland.

Its subcellular location is the secreted. Its function is as follows. Binds to muscle nicotinic acetylcholine receptor (nAChR) and inhibit acetylcholine from binding to the receptor, thereby impairing neuromuscular transmission. In Pseudechis australis (Mulga snake), this protein is Short neurotoxin 1.